A 291-amino-acid chain; its full sequence is NAD kinase (291 aa).

Aspartate 55 (proton acceptor) is an active-site residue. Residues 55–56, arginine 60, 130–131, aspartate 160, and 171–176 each bind NAD(+); these read DG, NE, and TAYAFS.

This sequence belongs to the NAD kinase family. It depends on a divalent metal cation as a cofactor.

It is found in the cytoplasm. It carries out the reaction NAD(+) + ATP = ADP + NADP(+) + H(+). Its function is as follows. Involved in the regulation of the intracellular balance of NAD and NADP, and is a key enzyme in the biosynthesis of NADP. Catalyzes specifically the phosphorylation on 2'-hydroxyl of the adenosine moiety of NAD to yield NADP. This is NAD kinase from Corynebacterium glutamicum (strain ATCC 13032 / DSM 20300 / JCM 1318 / BCRC 11384 / CCUG 27702 / LMG 3730 / NBRC 12168 / NCIMB 10025 / NRRL B-2784 / 534).